The sequence spans 124 residues: Large ribosomal subunit protein bL12 (124 aa).

It belongs to the bacterial ribosomal protein bL12 family. In terms of assembly, homodimer. Part of the ribosomal stalk of the 50S ribosomal subunit. Forms a multimeric L10(L12)X complex, where L10 forms an elongated spine to which 2 to 4 L12 dimers bind in a sequential fashion. Binds GTP-bound translation factors.

Forms part of the ribosomal stalk which helps the ribosome interact with GTP-bound translation factors. Is thus essential for accurate translation. The sequence is that of Large ribosomal subunit protein bL12 from Liberibacter africanus subsp. capensis.